The sequence spans 71 residues: MNDLKLLRSKLSTDTIEELYKNLNLLKKELFNLRFQQALGELKNTSRFSLVKKSIARIKTELTKRSNSEEY.

The protein belongs to the universal ribosomal protein uL29 family.

This chain is Large ribosomal subunit protein uL29, found in Rickettsia akari (strain Hartford).